A 467-amino-acid chain; its full sequence is Glutamate--tRNA ligase (467 aa).

The 'HIGH' region signature appears at 9–19 (PSPTGYLHIGG). The 'KMSKS' region signature appears at 237-241 (KLSKR). An ATP-binding site is contributed by K240.

The protein belongs to the class-I aminoacyl-tRNA synthetase family. Glutamate--tRNA ligase type 1 subfamily. Monomer.

It localises to the cytoplasm. The enzyme catalyses tRNA(Glu) + L-glutamate + ATP = L-glutamyl-tRNA(Glu) + AMP + diphosphate. Functionally, catalyzes the attachment of glutamate to tRNA(Glu) in a two-step reaction: glutamate is first activated by ATP to form Glu-AMP and then transferred to the acceptor end of tRNA(Glu). This Xanthomonas campestris pv. campestris (strain 8004) protein is Glutamate--tRNA ligase.